The following is a 314-amino-acid chain: WD repeat-containing protein 38 (314 aa).

WD repeat units follow at residues Q19–R58, G61–V100, G103–L142, G145–S184, G190–Q228, G231–K272, and V274–P312. Residues A294 to T314 form a disordered region.

This chain is WD repeat-containing protein 38 (WDR38), found in Homo sapiens (Human).